The sequence spans 232 residues: Recombination protein RecR (232 aa).

The C4-type zinc-finger motif lies at 92–107 (CQVCFHLSAEPVCDIC). One can recognise a Toprim domain in the interval 115-209 (SVICVVSDPR…KVTRIAFGLP (95 aa)).

This sequence belongs to the RecR family.

In terms of biological role, may play a role in DNA repair. It seems to be involved in an RecBC-independent recombinational process of DNA repair. It may act with RecF and RecO. In Synechocystis sp. (strain ATCC 27184 / PCC 6803 / Kazusa), this protein is Recombination protein RecR.